Reading from the N-terminus, the 247-residue chain is ATP synthase subunit a, chloroplastic (247 aa).

Helical transmembrane passes span 38–58 (QVLI…FIAV), 95–115 (VPFI…GALL), 134–154 (INTT…AGLS), 199–219 (LVVV…VMFL), and 220–240 (GLFT…AYIG).

The protein belongs to the ATPase A chain family. In terms of assembly, F-type ATPases have 2 components, CF(1) - the catalytic core - and CF(0) - the membrane proton channel. CF(1) has five subunits: alpha(3), beta(3), gamma(1), delta(1), epsilon(1). CF(0) has four main subunits: a, b, b' and c.

Its subcellular location is the plastid. The protein resides in the chloroplast thylakoid membrane. Functionally, key component of the proton channel; it plays a direct role in the translocation of protons across the membrane. The sequence is that of ATP synthase subunit a, chloroplastic from Citrus sinensis (Sweet orange).